The primary structure comprises 353 residues: Guanine nucleotide-binding protein subunit alpha (353 aa).

A disordered region spans residues 1 to 21 (MGCGMSTEEKEGKARNEEIEN). Gly2 carries the N-myristoyl glycine lipid modification. A lipid anchor (S-palmitoyl cysteine) is attached at Cys3. Basic and acidic residues predominate over residues 7 to 21 (TEEKEGKARNEEIEN). The G-alpha domain maps to 32-353 (NEIKMLLLGA…QENLRLCGLI (322 aa)). The interval 35–48 (KMLLLGAGESGKST) is G1 motif. Positions 43, 44, 45, 46, 47, 48, 150, 175, 181, 203, 269, 270, 272, and 325 each coordinate GTP. Mg(2+) is bound at residue Ser47. A G2 motif region spans residues 173-181 (DVLRSRVKT). Position 181 (Thr181) interacts with Mg(2+). The segment at 196–205 (YRMFDVGGQR) is G3 motif. A G4 motif region spans residues 265–272 (ILFLNKID). The interval 323–328 (TCATDT) is G5 motif.

Belongs to the G-alpha family. G(q) subfamily. G proteins are composed of 3 units; alpha, beta and gamma. The alpha chain contains the guanine nucleotide binding site. Mg(2+) is required as a cofactor.

Its function is as follows. Guanine nucleotide-binding proteins (G proteins) are involved as modulators or transducers in various transmembrane signaling systems. Plays a role in pathogenicity, specifically in appressorium formation in rice blast disease. Also involved in mating. This chain is Guanine nucleotide-binding protein subunit alpha (MAGB), found in Pyricularia oryzae (strain 70-15 / ATCC MYA-4617 / FGSC 8958) (Rice blast fungus).